Here is a 347-residue protein sequence, read N- to C-terminus: Melatonin receptor type 1B-B (347 aa).

Topologically, residues 1-36 (MPENIAFLTNSTDLGHVGRALGSSARPAWAIAVLAS) are extracellular. Asn-10 carries N-linked (GlcNAc...) asparagine glycosylation. A helical transmembrane segment spans residues 37–57 (VLIFTTVVDVLGNLLVIISVF). Over 58-72 (RNRKLRNAGNVFVVS) the chain is Cytoplasmic. Residues 73–93 (LAFADLVVAFYPYPLVLYAIF) traverse the membrane as a helical segment. At 94–105 (HDGWSLGETQCK) the chain is on the extracellular side. Cysteines 104 and 181 form a disulfide. The helical transmembrane segment at 106-126 (ISGFLMGLSVIGSVFNITGIA) threads the bilayer. Residues 127–148 (INRYCYICHSFAYGRLYSFRNT) lie on the Cytoplasmic side of the membrane. Residues 149–169 (LLLVALIWALTVLAILPNFFV) traverse the membrane as a helical segment. At 170–191 (GSLSYDPRVYSCTFTQTASSSY) the chain is on the extracellular side. Residues 192–212 (TVVVVVVHFLVPIAVVTFCYL) form a helical membrane-spanning segment. At 213–244 (RIWVLVIQVRRKVKSEERSRVRPSDLRNFVTM) the chain is on the cytoplasmic side. The helical transmembrane segment at 245–265 (FVVFVLFAICWAPLNLIGLVV) threads the bilayer. The Extracellular portion of the chain corresponds to 266-278 (AINPEVMAPRVPE). The helical transmembrane segment at 279 to 299 (WLFVVSYFMAYFNSCLNAIIY) threads the bilayer. Over 300–347 (GLLNRNFRKEYVRIMTAVWIPRRFVTETSRAATDGMRSKPSPAINNNE) the chain is Cytoplasmic.

It belongs to the G-protein coupled receptor 1 family.

It is found in the cell membrane. Functionally, high affinity receptor for melatonin. The activity of this receptor is mediated by pertussis toxin sensitive G proteins that inhibits adenylate cyclase activity. The chain is Melatonin receptor type 1B-B (mtnr1bb) from Danio rerio (Zebrafish).